The chain runs to 368 residues: Phospho-N-acetylmuramoyl-pentapeptide-transferase (368 aa).

10 helical membrane passes run 34 to 54, 79 to 99, 102 to 122, 140 to 160, 176 to 196, 207 to 227, 247 to 267, 271 to 291, 296 to 316, and 345 to 365; these read GAVV…IDHL, TPTM…VLWA, LNPY…VGFY, ARLL…VRLG, LVIK…VGAG, GLAI…AYLA, LAVL…FNAP, IFMG…IAVA, IVLA…IVQV, and QIVI…LSTL.

It belongs to the glycosyltransferase 4 family. MraY subfamily. Mg(2+) is required as a cofactor.

The protein resides in the cell inner membrane. The catalysed reaction is UDP-N-acetyl-alpha-D-muramoyl-L-alanyl-gamma-D-glutamyl-meso-2,6-diaminopimeloyl-D-alanyl-D-alanine + di-trans,octa-cis-undecaprenyl phosphate = di-trans,octa-cis-undecaprenyl diphospho-N-acetyl-alpha-D-muramoyl-L-alanyl-D-glutamyl-meso-2,6-diaminopimeloyl-D-alanyl-D-alanine + UMP. It functions in the pathway cell wall biogenesis; peptidoglycan biosynthesis. In terms of biological role, catalyzes the initial step of the lipid cycle reactions in the biosynthesis of the cell wall peptidoglycan: transfers peptidoglycan precursor phospho-MurNAc-pentapeptide from UDP-MurNAc-pentapeptide onto the lipid carrier undecaprenyl phosphate, yielding undecaprenyl-pyrophosphoryl-MurNAc-pentapeptide, known as lipid I. The sequence is that of Phospho-N-acetylmuramoyl-pentapeptide-transferase from Bradyrhizobium sp. (strain ORS 278).